The sequence spans 855 residues: Lon protease (855 aa).

The 244-residue stretch at 45-288 (IYLLTVKNVV…ETFRFLNIEY (244 aa)) folds into the Lon N-terminal domain. 439-446 (GPPGVGKT) contacts ATP. Residues 674–855 (IQVPGVVTGL…NEVIDLSIIK (182 aa)) form the Lon proteolytic domain. Active-site residues include serine 761 and lysine 804.

It belongs to the peptidase S16 family. Homohexamer. Organized in a ring with a central cavity.

The protein localises to the cytoplasm. The catalysed reaction is Hydrolysis of proteins in presence of ATP.. ATP-dependent serine protease that mediates the selective degradation of mutant and abnormal proteins as well as certain short-lived regulatory proteins. Required for cellular homeostasis and for survival from DNA damage and developmental changes induced by stress. Degrades polypeptides processively to yield small peptide fragments that are 5 to 10 amino acids long. Binds to DNA in a double-stranded, site-specific manner. This chain is Lon protease, found in Karelsulcia muelleri (strain GWSS) (Sulcia muelleri).